The primary structure comprises 424 residues: N-succinylarginine dihydrolase (424 aa).

Substrate contacts are provided by residues 19-28, Asn-110, and 137-138; these read AGLSRGNVAS and HR. Glu-174 is an active-site residue. Arg-206 is a substrate binding site. His-242 is a catalytic residue. Positions 244 and 351 each coordinate substrate. Residue Cys-357 is the Nucleophile of the active site.

It belongs to the succinylarginine dihydrolase family. Homodimer.

It catalyses the reaction N(2)-succinyl-L-arginine + 2 H2O + 2 H(+) = N(2)-succinyl-L-ornithine + 2 NH4(+) + CO2. It functions in the pathway amino-acid degradation; L-arginine degradation via AST pathway; L-glutamate and succinate from L-arginine: step 2/5. Its function is as follows. Catalyzes the hydrolysis of N(2)-succinylarginine into N(2)-succinylornithine, ammonia and CO(2). The chain is N-succinylarginine dihydrolase from Zymomonas mobilis subsp. mobilis (strain ATCC 31821 / ZM4 / CP4).